A 156-amino-acid chain; its full sequence is 3-hydroxyacyl-[acyl-carrier-protein] dehydratase FabZ (156 aa).

His54 is an active-site residue.

It belongs to the thioester dehydratase family. FabZ subfamily.

The protein localises to the cytoplasm. The enzyme catalyses a (3R)-hydroxyacyl-[ACP] = a (2E)-enoyl-[ACP] + H2O. Functionally, involved in unsaturated fatty acids biosynthesis. Catalyzes the dehydration of short chain beta-hydroxyacyl-ACPs and long chain saturated and unsaturated beta-hydroxyacyl-ACPs. This is 3-hydroxyacyl-[acyl-carrier-protein] dehydratase FabZ from Koribacter versatilis (strain Ellin345).